The following is a 749-amino-acid chain: Semaphorin-3B (749 aa).

An N-terminal signal peptide occupies residues Met1–Ala24. Residues Arg30 to Leu513 enclose the Sema domain. An N-linked (GlcNAc...) asparagine glycan is attached at Asn82. A disulfide bond links Cys102 and Cys113. An N-linked (GlcNAc...) asparagine glycan is attached at Asn124. Intrachain disulfides connect Cys131-Cys140, Cys269-Cys380, and Cys293-Cys340. Asn427 is a glycosylation site (N-linked (GlcNAc...) asparagine). Cystine bridges form between Cys516/Cys534 and Cys644/Cys710. The Ig-like C2-type domain occupies Pro573–Ser659. A disordered region spans residues Gly702 to Trp749. Over residues His733–Pro743 the composition is skewed to basic and acidic residues.

Belongs to the semaphorin family. As to expression, expressed abundantly but differentially in a variety of neural and nonneural tissues.

The protein localises to the secreted. Its subcellular location is the endoplasmic reticulum. In terms of biological role, inhibits axonal extension by providing local signals to specify territories inaccessible for growing axons. This chain is Semaphorin-3B (SEMA3B), found in Homo sapiens (Human).